Consider the following 699-residue polypeptide: tRNA(Met) cytidine acetyltransferase TmcA (699 aa).

ATP contacts are provided by residues glutamine 179, glycine 201–methionine 210, and arginine 323. The 185-residue stretch at isoleucine 359 to leucine 543 folds into the N-acetyltransferase domain. Acetyl-CoA-binding positions include valine 471–valine 473, glutamate 511, and arginine 518.

This sequence belongs to the RNA cytidine acetyltransferase family. TmcA subfamily.

Its subcellular location is the cytoplasm. It catalyses the reaction cytidine(34) in elongator tRNA(Met) + acetyl-CoA + ATP + H2O = N(4)-acetylcytidine(34) in elongator tRNA(Met) + ADP + phosphate + CoA + H(+). Functionally, catalyzes the formation of N(4)-acetylcytidine (ac(4)C) at the wobble position of tRNA(Met), by using acetyl-CoA as an acetyl donor and ATP (or GTP). The protein is tRNA(Met) cytidine acetyltransferase TmcA of Yersinia pestis (strain D106004).